Consider the following 1026-residue polypeptide: Multidrug resistance protein MdtC (1026 aa).

The next 10 membrane-spanning stretches (helical) occupy residues 12–34 (VATLLLTLAIALCGVLGFRLLPV), 336–353 (QSLIIAVALVILVVFLFL), 360–382 (AIPALAVPVSLIGTFAAMYLCGF), 431–450 (VGFTVLSMSLSLVAVFLPLL), 463–485 (FAVTLSVAIMISLLISLTLTPML), 525–547 (HARWVLLLLLGTIALNVWLYISI), 853–875 (LLLILAAIITVYIVLGILYESYV), 895–917 (LEWFGAPFSLVALIGIMLLIGIV), 948–970 (LLRFRPIMMTTLAALFGALPLVL), and 985–1007 (TIVGGLLMSQVLTLYTTPVVYLF).

Belongs to the resistance-nodulation-cell division (RND) (TC 2.A.6) family. MdtC subfamily. As to quaternary structure, part of a tripartite efflux system composed of MdtA, MdtB and MdtC. MdtC forms a heteromultimer with MdtB.

The protein resides in the cell inner membrane. This Pectobacterium atrosepticum (strain SCRI 1043 / ATCC BAA-672) (Erwinia carotovora subsp. atroseptica) protein is Multidrug resistance protein MdtC.